We begin with the raw amino-acid sequence, 123 residues long: Large ribosomal subunit protein uL29 (123 aa).

It belongs to the universal ribosomal protein uL29 family. As to quaternary structure, component of the large ribosomal subunit.

The protein localises to the cytoplasm. Functionally, component of the large ribosomal subunit. The ribosome is a large ribonucleoprotein complex responsible for the synthesis of proteins in the cell. The sequence is that of Large ribosomal subunit protein uL29 (rpl35) from Platichthys flesus (European flounder).